The following is a 378-amino-acid chain: Actin-related protein 2/3 complex subunit 1A (378 aa).

7 WD repeats span residues 8 to 47, 53 to 92, 97 to 138, 143 to 182, 203 to 242, 257 to 295, and 331 to 375; these read RFAE…HWER, KHDQ…WVPT, RLNR…WVSK, RHES…VDTK, LSYS…PLAQ, ISEK…KAAS, and VHDN…QELG.

The protein belongs to the WD repeat ARPC1 family. As to quaternary structure, component of the Arp2/3 complex composed of ARP2, ARP3, ARPC1/p41-ARC, ARPC2/p34-ARC, ARPC3/p21-ARC, ARPC4/p20-ARC and ARPC5/p16-ARC. As to expression, expressed at low levels in all tissues with a relatively highest expression in inflorescences.

The protein resides in the cytoplasm. It is found in the cytoskeleton. Functionally, functions as a component of the Arp2/3 complex which is involved in regulation of actin polymerization and together with an activating nucleation-promoting factor (NPF) mediates the formation of branched actin networks. Arp2/3 complex plays a critical role in the control of cell morphogenesis via the modulation of cell polarity development. This chain is Actin-related protein 2/3 complex subunit 1A (ARPC1A), found in Arabidopsis thaliana (Mouse-ear cress).